The primary structure comprises 639 residues: 3-hydroxybenzoate 4-monooxygenase (639 aa).

Residues 34-64, Q73, V166, N212, 269-271, Y317, D349, and S365 contribute to the FAD site; these read DVLI…IVEQ and RFY.

This sequence belongs to the PheA/TfdB FAD monooxygenase family. Homodimer. FAD is required as a cofactor.

The enzyme catalyses 3-hydroxybenzoate + NADPH + O2 + H(+) = 3,4-dihydroxybenzoate + NADP(+) + H2O. In terms of biological role, converts 3-hydroxybenzoate (m-hydroxybenzoate), and to a lesser extent p-hydroxybenzoate, to 3,4-dihydroxybenzoate (protocatechuate). Also acts on a number of analogs of 3-hydroxybenzoate substituted in the 2, 4, 5 and 6 positions. The sequence is that of 3-hydroxybenzoate 4-monooxygenase (mobA) from Comamonas testosteroni (Pseudomonas testosteroni).